The primary structure comprises 454 residues: Guanine deaminase (454 aa).

Residues histidine 82 and histidine 84 each coordinate Zn(2+). Substrate-binding positions include 84–87, 213–214, 240–243, and aspartate 330; these read HASQ, RF, and HISE. Residues histidine 240 and aspartate 330 each coordinate Zn(2+). Phosphoserine is present on serine 453.

The protein belongs to the metallo-dependent hydrolases superfamily. ATZ/TRZ family. In terms of assembly, homodimer. Zn(2+) serves as cofactor.

It catalyses the reaction guanine + H2O + H(+) = xanthine + NH4(+). It participates in purine metabolism; guanine degradation; xanthine from guanine: step 1/1. Functionally, catalyzes the hydrolytic deamination of guanine, producing xanthine and ammonia. This chain is Guanine deaminase, found in Homo sapiens (Human).